Consider the following 241-residue polypeptide: tRNA pseudouridine synthase B (241 aa).

The active-site Nucleophile is Asp45.

It belongs to the pseudouridine synthase TruB family. Type 1 subfamily.

The catalysed reaction is uridine(55) in tRNA = pseudouridine(55) in tRNA. Its function is as follows. Responsible for synthesis of pseudouridine from uracil-55 in the psi GC loop of transfer RNAs. This chain is tRNA pseudouridine synthase B, found in Chlamydia trachomatis serovar L2 (strain ATCC VR-902B / DSM 19102 / 434/Bu).